A 407-amino-acid chain; its full sequence is tRNA N6-adenosine threonylcarbamoyltransferase, mitochondrial (407 aa).

A mitochondrion-targeting transit peptide spans 1-30 (MISIKGTGRFLLDNYRIWQRRAFNRPIQLR). A divalent metal cation-binding residues include His145 and His149. Substrate-binding positions include 170–174 (LVSGG), Asp203, Ala217, Glu221, 328–329 (SN), and Ser360. Position 361 (Asp361) interacts with a divalent metal cation.

It belongs to the KAE1 / TsaD family. Homodimer. A divalent metal cation serves as cofactor.

Its subcellular location is the mitochondrion. The catalysed reaction is L-threonylcarbamoyladenylate + adenosine(37) in tRNA = N(6)-L-threonylcarbamoyladenosine(37) in tRNA + AMP + H(+). Required for the formation of a threonylcarbamoyl group on adenosine at position 37 (t(6)A37) in mitochondrial tRNAs that read codons beginning with adenine. Probably involved in the transfer of the threonylcarbamoyl moiety of threonylcarbamoyl-AMP (TC-AMP) to the N6 group of A37. Involved in mitochondrial genome maintenance. The polypeptide is tRNA N6-adenosine threonylcarbamoyltransferase, mitochondrial (QRI7) (Saccharomyces cerevisiae (strain ATCC 204508 / S288c) (Baker's yeast)).